We begin with the raw amino-acid sequence, 281 residues long: Probable replication-associated protein repA1 (281 aa).

The protein belongs to the IncFII RepA family.

In terms of biological role, this protein is essential for plasmid replication; it is involved in copy control functions. This chain is Probable replication-associated protein repA1 (repA1), found in Buchnera aphidicola subsp. Cinara cedri (strain Cc).